Reading from the N-terminus, the 160-residue chain is Peptidyl-prolyl cis-trans isomerase CYP18-1 (160 aa).

In terms of domain architecture, PPIase cyclophilin-type spans 3–153 (VTLHTNLGDI…AEIRLNRVTI (151 aa)).

The protein belongs to the cyclophilin-type PPIase family. As to expression, ubiquitous.

Its subcellular location is the cytoplasm. The catalysed reaction is [protein]-peptidylproline (omega=180) = [protein]-peptidylproline (omega=0). Its function is as follows. PPIases accelerate the folding of proteins. It catalyzes the cis-trans isomerization of proline imidic peptide bonds in oligopeptides. This is Peptidyl-prolyl cis-trans isomerase CYP18-1 (CYP18-1) from Arabidopsis thaliana (Mouse-ear cress).